A 253-amino-acid polypeptide reads, in one-letter code: Probable transcriptional regulatory protein RPR_05505 (253 aa).

It belongs to the TACO1 family.

It is found in the cytoplasm. This chain is Probable transcriptional regulatory protein RPR_05505, found in Rickettsia peacockii (strain Rustic).